The chain runs to 574 residues: Proline--tRNA ligase (574 aa).

The protein belongs to the class-II aminoacyl-tRNA synthetase family. ProS type 1 subfamily. Homodimer.

The protein resides in the cytoplasm. It catalyses the reaction tRNA(Pro) + L-proline + ATP = L-prolyl-tRNA(Pro) + AMP + diphosphate. In terms of biological role, catalyzes the attachment of proline to tRNA(Pro) in a two-step reaction: proline is first activated by ATP to form Pro-AMP and then transferred to the acceptor end of tRNA(Pro). As ProRS can inadvertently accommodate and process non-cognate amino acids such as alanine and cysteine, to avoid such errors it has two additional distinct editing activities against alanine. One activity is designated as 'pretransfer' editing and involves the tRNA(Pro)-independent hydrolysis of activated Ala-AMP. The other activity is designated 'posttransfer' editing and involves deacylation of mischarged Ala-tRNA(Pro). The misacylated Cys-tRNA(Pro) is not edited by ProRS. The sequence is that of Proline--tRNA ligase from Fervidobacterium nodosum (strain ATCC 35602 / DSM 5306 / Rt17-B1).